A 429-amino-acid polypeptide reads, in one-letter code: Enolase (429 aa).

Gln162 is a (2R)-2-phosphoglycerate binding site. Glu204 acts as the Proton donor in catalysis. Mg(2+) is bound by residues Asp241, Glu283, and Asp310. Lys335, Arg364, Ser365, and Lys386 together coordinate (2R)-2-phosphoglycerate. Lys335 acts as the Proton acceptor in catalysis.

It belongs to the enolase family. Requires Mg(2+) as cofactor.

The protein resides in the cytoplasm. Its subcellular location is the secreted. The protein localises to the cell surface. It carries out the reaction (2R)-2-phosphoglycerate = phosphoenolpyruvate + H2O. The protein operates within carbohydrate degradation; glycolysis; pyruvate from D-glyceraldehyde 3-phosphate: step 4/5. In terms of biological role, catalyzes the reversible conversion of 2-phosphoglycerate (2-PG) into phosphoenolpyruvate (PEP). It is essential for the degradation of carbohydrates via glycolysis. This is Enolase from Mycobacterium bovis (strain BCG / Pasteur 1173P2).